The chain runs to 116 residues: Flagellar transcriptional regulator FlhD (116 aa).

It belongs to the FlhD family. Homodimer; disulfide-linked. Forms a heterohexamer composed of two FlhC and four FlhD subunits. Each FlhC binds a FlhD dimer, forming a heterotrimer, and a hexamer assembles by dimerization of two heterotrimers.

The protein localises to the cytoplasm. Functionally, functions in complex with FlhC as a master transcriptional regulator that regulates transcription of several flagellar and non-flagellar operons by binding to their promoter region. Activates expression of class 2 flagellar genes, including fliA, which is a flagellum-specific sigma factor that turns on the class 3 genes. Also regulates genes whose products function in a variety of physiological pathways. The chain is Flagellar transcriptional regulator FlhD from Escherichia coli O9:H4 (strain HS).